Reading from the N-terminus, the 243-residue chain is Urease accessory protein UreF 2 (243 aa).

This sequence belongs to the UreF family. UreD, UreF and UreG form a complex that acts as a GTP-hydrolysis-dependent molecular chaperone, activating the urease apoprotein by helping to assemble the nickel containing metallocenter of UreC. The UreE protein probably delivers the nickel.

The protein resides in the cytoplasm. In terms of biological role, required for maturation of urease via the functional incorporation of the urease nickel metallocenter. Disrupting the ure2 operon has no effect on urease activity or pathogen survival in BALB/c mice when administered orally. This Brucella abortus (strain 2308) protein is Urease accessory protein UreF 2.